A 484-amino-acid polypeptide reads, in one-letter code: ATP-dependent rRNA helicase RRP3 (484 aa).

A compositionally biased stretch (polar residues) spans 1 to 10 (MAIVGSNSVS). Positions 1–61 (MAIVGSNSVS…SSQKSKNIVE (61 aa)) are disordered. The span at 18 to 54 (RNDARDLAEKIKRNALKKQEQDKKQQLEEESKPESSQ) shows a compositional bias: basic and acidic residues. The Q motif signature appears at 71–99 (STFSELKLVPELLEAIQQMKFSKPTPIQS). Residues 102-273 (IPHALEGKDI…RASLHNPVRV (172 aa)) enclose the Helicase ATP-binding domain. 115 to 122 (AQTGSGKT) lines the ATP pocket. Positions 221 to 224 (DEAD) match the DEAD box motif. The Helicase C-terminal domain maps to 300–444 (YLIHLLNEFV…KDPSPPKAML (145 aa)). Residues 460-484 (RQTKEFHEKTRRGRRGKDDKDREEH) are disordered. The segment covering 475 to 484 (GKDDKDREEH) has biased composition (basic and acidic residues).

Belongs to the DEAD box helicase family. DDX47/RRP3 subfamily. Interacts with the SSU processome.

The protein resides in the nucleus. The enzyme catalyses ATP + H2O = ADP + phosphate + H(+). In terms of biological role, ATP-dependent rRNA helicase required for pre-ribosomal RNA processing. Involved in the maturation of the 35S-pre-rRNA and to its cleavage to mature 18S rRNA. The chain is ATP-dependent rRNA helicase RRP3 from Scheffersomyces stipitis (strain ATCC 58785 / CBS 6054 / NBRC 10063 / NRRL Y-11545) (Yeast).